We begin with the raw amino-acid sequence, 849 residues long: MIAYCGTTTMSDDIDWLHSRRGVCKVDLYSPKGQQDQDRKVICFVDVSTLNVEDKDSKGAAGSRSEGELNLETLEEKEIIVIKDTEKQDQSKTEGSVCLFKQAPSDPISVLNWLLNDLQKYALGFQHALSPSASSCKHKVGDLEGDYSKIPSENCYSVYADQVNFDYLNKGPQNLRLEMAASKNTNNNQSPSNPATKSPSNQRSVATPEGECSMDDLSFYVNRLSSLVIQMARKEIKDKLEGGSKCLHHSMYTSGDKGKTSPRSAVSKIASEMAHEAVELTSSEMRGNGEDCRDGRKTFLYSEMCNKNKCGEKQQMCPKDSKEFADSISKGLMVYANQVASDMMVSVMKTLKVHSCGKPIPACVVLKRVLLKHTKEIVSDLIDSCMKNLHNITGVLMTDSDFVSAVKRNLFNHGKQNAADIMEAMLKRLVSALLGEKKETKSQSLAYATLKAGTNDPKCKNQSLEFSAMKAEMKGKDKCKSKADPCCKSLTSAERVSEHILKESLTMWNNQKQGNQGKVTNKVCCTSKDEKREKISPSTDSLAKDLIVSALMLIQYHLTQQAKGKDPCEEECPGSSMGYMSQSAQYEKCGGGQSSKSLSMKHFETRGAPGPSTCMKENQLESQKMDMSNMVLSLIQKLLSESPFSCDELTESDNKRCCDPRSSKAAPMAKRPEEQCQDNAELDFISGMKQMNRQFIDQLVESVMKLCLIMAKYSNNGAALAELEEQAALVGSGSRCGRDAMMSQNYSETPGPEVIVNNQCSTTNLQKQLQAVLQWIAASQFNVPMLYFMGDDDGQLEKLPEVSAKAAEKGYSVGDLLQEVMKFAKERQLDEAVGNMARKQLLDWLLANL.

Residues 1 to 188 (MIAYCGTTTM…MAASKNTNNN (188 aa)) constitute a propeptide that is removed on maturation. Residues Ser-96, Ser-130, Ser-190, and Ser-204 each carry the phosphoserine modification. The segment covering 183–205 (KNTNNNQSPSNPATKSPSNQRSV) has biased composition (polar residues). The segment at 183-210 (KNTNNNQSPSNPATKSPSNQRSVATPEG) is disordered. Residue Thr-207 is modified to Phosphothreonine. A phosphoserine mark is found at Ser-213, Ser-226, and Ser-271. The interval 219 to 232 (FYVNRLSSLVIQMA) is PKA-RI and PKA-RII subunit binding domain. Position 301 is a phosphotyrosine (Tyr-301). Residues Ser-302, Ser-341, Ser-431, Ser-442, Ser-444, Ser-463, Ser-492, Ser-497, and Ser-504 each carry the phosphoserine modification. A PKA-RI-alpha subunit binding domain region spans residues 335–344 (YANQVASDMM). Thr-506 is subject to Phosphothreonine. Residue Ser-538 is modified to Phosphoserine. At Ser-583 the chain carries Phosphoserine; by STK33. Phosphoserine is present on residues Ser-628, Ser-633, Ser-652, and Ser-702.

Belongs to the AKAP110 family. In terms of assembly, interacts with PRKAR1A and PRKAR2A. Interacts with ENO4. Interacts with QRICH2. In terms of processing, phosphorylated by STK33 during sperm flagella assembly. Expressed in the fibrous sheath of spermatozoa (at protein level). Expressed in step 1 to step 6 spermatids, abundance then increases during steps 8 to 12, abundance decreases thereafter.

The protein resides in the cell projection. The protein localises to the cilium. Its subcellular location is the flagellum. In terms of biological role, major structural component of sperm fibrous sheath. Plays a role in sperm motility. This chain is A-kinase anchor protein 4, found in Mus musculus (Mouse).